The primary structure comprises 720 residues: ATP-dependent RNA helicase glh-3 (720 aa).

Polar residues predominate over residues 1–11 (MDKSPTKTSIR). 2 disordered regions span residues 1–34 (MDKSPTKTSIRTKFARHQPISDVDTTEQSSSCIK) and 125–180 (LNSR…SYGN). Basic and acidic residues-rich tracts occupy residues 141-154 (NVKENEGSIHRSDD) and 162-172 (SAKDEERDRDS). CCHC-type zinc fingers lie at residues 202–219 (NTCFNCKKYGHRATECSA) and 222–239 (RECANCGDPNHRANECAS). A Q motif motif is present at residues 298–326 (KSFSDSDIPQSMRRNVERAGYTRTTPIQQ). The 185-residue stretch at 329–513 (LPLVADGKDI…RKLLREDYTM (185 aa)) folds into the Helicase ATP-binding domain. 342 to 349 (AQTGSGKT) contributes to the ATP binding site. The short motif at 456-459 (DEAD) is the DEAD box element. The region spanning 549–698 (DIDTYTTEKN…VVPSWMKEAA (150 aa)) is the Helicase C-terminal domain. A disordered region spans residues 696-720 (EAAGGTSNPNKFEKSIDTEEPEEAW).

The protein belongs to the DEAD box helicase family. DDX4/VASA subfamily. As to quaternary structure, interacts with csn-5. Interacts (via C-terminus) with kgb-1. Interacts with zyx-1.

The protein localises to the cytoplasm. It carries out the reaction ATP + H2O = ADP + phosphate + H(+). Its function is as follows. Probable ATP-binding RNA helicase. This chain is ATP-dependent RNA helicase glh-3, found in Caenorhabditis elegans.